Here is a 472-residue protein sequence, read N- to C-terminus: Carbohydrate sulfotransferase 3 (472 aa).

At 1 to 19 (MEKGLALPQDFRDLVHSLK) the chain is on the cytoplasmic side. The helical; Signal-anchor for type II membrane protein transmembrane segment at 20-38 (IRGRYVLFLAFVVIVFIFI) threads the bilayer. The Lumenal portion of the chain corresponds to 39–472 (EKENKIISRV…LEERGTFWVT (434 aa)). 3 N-linked (GlcNAc...) asparagine glycosylation sites follow: N63, N74, and N96. Residue 135–141 (TRTGSSF) participates in 3'-phosphoadenylyl sulfate binding. A glycan (N-linked (GlcNAc...) asparagine) is linked at N250. 295-303 (RDPRAVLAS) provides a ligand contact to 3'-phosphoadenylyl sulfate. Residues N413 and N457 are each glycosylated (N-linked (GlcNAc...) asparagine).

It belongs to the sulfotransferase 1 family. Gal/GlcNAc/GalNAc subfamily. In terms of processing, N-glycosylated. Widely expressed. Highly expressed in spleen, lung, eye and stomach. Constitutively expressed at low level during the mid- to late-gestation period. Expressed in the brain in a temporally controlled manner: peaks at 2 weeks after birth in the cerebellum, but at 3 weeks in the cerebrum. Localizes to stromal cells in the bone marrow, and stromal cells in the marginal zone and red pulp of the spleen, but the sense probe did not.

It localises to the golgi apparatus membrane. The enzyme catalyses chondroitin beta-D-glucuronate + n 3'-phosphoadenylyl sulfate = chondroitin 6'-sulfate + n adenosine 3',5'-bisphosphate + n H(+). It catalyses the reaction 3'-phosphoadenylyl sulfate + keratan = adenosine 3',5'-bisphosphate + keratan 6'-sulfate.. Its function is as follows. Sulfotransferase that utilizes 3'-phospho-5'-adenylyl sulfate (PAPS) as sulfonate donor to catalyze the transfer of sulfate to position 6 of the N-acetylgalactosamine (GalNAc) residue of chondroitin. Chondroitin sulfate constitutes the predominant proteoglycan present in cartilage and is distributed on the surfaces of many cells and extracellular matrices. Catalyzes with a lower efficiency the sulfation of Gal residues of keratan sulfate, another glycosaminoglycan. Can also catalyze the sulfation of the Gal residues in sialyl N-acetyllactosamine (sialyl LacNAc) oligosaccharides. May play a role in the maintenance of naive T-lymphocytes in the spleen. The sequence is that of Carbohydrate sulfotransferase 3 (Chst3) from Mus musculus (Mouse).